The sequence spans 1209 residues: Protein phosphatase 1 regulatory subunit 26 (1209 aa).

Disordered stretches follow at residues 57-91 (DGAA…TVHK), 145-279 (SGAA…HRQG), 291-471 (KPPR…VERS), 501-532 (GSDG…DSDD), 555-694 (GESC…EDLD), 733-836 (EQLG…SNDS), 848-1033 (KAKE…FAHQ), 1052-1072 (RGGV…GLPS), and 1118-1209 (AFRE…VVKV). The segment covering 63–91 (TSDERAAQRGHRAEGCHDARPAAKPTVHK) has biased composition (basic and acidic residues). Over residues 201–219 (QVGSSKDQGSASPVSVSSD) the composition is skewed to low complexity. Over residues 226-255 (IRAEIEQFLNEKRQHETQKCDGSVEKKPDT) the composition is skewed to basic and acidic residues. Residues 301 to 321 (QPRSLRSKVTTTQENEGSTKP) are compositionally biased toward polar residues. The span at 352–362 (SAAQASEASDS) shows a compositional bias: low complexity. A compositionally biased stretch (basic and acidic residues) spans 442–454 (DTDHAPKLLKETK). Composition is skewed to basic and acidic residues over residues 609 to 637 (KMQE…RRDL), 667 to 685 (KTDE…DKSS), and 757 to 766 (SKRDSGEGPG). Composition is skewed to low complexity over residues 821–836 (PGSL…SNDS) and 852–861 (SVSSSEVQAE). Phosphoserine is present on Ser1161. Over residues 1187–1209 (GSDASDFSDTSTEDSGGSSVVKV) the composition is skewed to low complexity.

Interacts with UTP20 and PPP1CA. In terms of tissue distribution, ubiquitous in normal tissues. Expressed in numerous adenocarcinoma cell lines.

It is found in the nucleus. Its subcellular location is the nucleolus. In terms of biological role, inhibits phosphatase activity of protein phosphatase 1 (PP1) complexes. May positively regulate cell proliferation. The sequence is that of Protein phosphatase 1 regulatory subunit 26 (PPP1R26) from Homo sapiens (Human).